We begin with the raw amino-acid sequence, 349 residues long: Divinyl chlorophyll a/b light-harvesting protein PcbA (349 aa).

A run of 6 helical transmembrane segments spans residues 27–47 (FIAAHAAHTGLIAFWAGAFTL), 57–77 (VPMGHQPLIALPHLATLGIGF), 89–109 (VVAVAVCHLVGSMAYGAGGLM), 202–222 (VMGGHAFLAFLEITGGAFHIA), 242–262 (AILSWSLAGIGWMAVVAAFWS), and 304–324 (LANVHYYFGFFFIQGHLWHAL).

This sequence belongs to the PsbB/PsbC family. IsiA/Pcb subfamily. The antenna complex consists of divinyl chlorophylls (a and b) and divinyl chlorophyll a/b binding proteins and binds more divinyl chlorophyll b than does the antenna complex from high-light-adapted Prochlorococcus. Divinyl chlorophyll a serves as cofactor. Requires divinyl chlorophyll b as cofactor.

The protein localises to the cellular thylakoid membrane. The antenna complex functions as a light receptor, it captures and delivers excitation energy to photosystems II and I. The Prochlorales pcb genes are not related to higher plant LHCs. This is Divinyl chlorophyll a/b light-harvesting protein PcbA (pcbA) from Prochlorococcus marinus (strain NATL2A).